The sequence spans 376 residues: Ribonuclease D (376 aa).

In terms of domain architecture, 3'-5' exonuclease spans 8-176 (IQWIRDDASL…VYLALDARLS (169 aa)). Residues 214–294 (RPQQLAVLRE…AEAARLPQSE (81 aa)) form the HRDC domain.

The protein belongs to the RNase D family. It depends on a divalent metal cation as a cofactor.

It is found in the cytoplasm. The enzyme catalyses Exonucleolytic cleavage that removes extra residues from the 3'-terminus of tRNA to produce 5'-mononucleotides.. Exonuclease involved in the 3' processing of various precursor tRNAs. Initiates hydrolysis at the 3'-terminus of an RNA molecule and releases 5'-mononucleotides. This is Ribonuclease D from Pseudomonas paraeruginosa (strain DSM 24068 / PA7) (Pseudomonas aeruginosa (strain PA7)).